Consider the following 313-residue polypeptide: MANRRKIALIGAGNIGGELAALIARKELGDVVLFDIPQKTDFAKGKALDLEQNGAVLGYDASIKGTSSWADCAGADVLIVTAGIPRKPGQSRDDLVATNLPIIRSVADGAKEHCPNALVIVISNPIDAMVYEFKRRTGFPRERVLGMAGVLDSARFQLFLAREANVSVKDVRAMVLGGHGDDMVPIPSACTINGVRATELISKEKLDALIARTRKGGGEIVQLMGTSAYYAPASSAVAMAESYLLDQKRLLPVAAYLDGEYGYKDIFMGVPVILGGKGIEKIVELPLTAEEKEMLAKSAKSVQGITDVVKASS.

NAD(+) is bound by residues G11–G16 and D35. 2 residues coordinate substrate: R86 and R92. Residues N99 and I122 to N124 contribute to the NAD(+) site. Substrate is bound by residues N124 and R155. H179 functions as the Proton acceptor in the catalytic mechanism.

Belongs to the LDH/MDH superfamily. MDH type 3 family.

The enzyme catalyses (S)-malate + NAD(+) = oxaloacetate + NADH + H(+). Its function is as follows. Catalyzes the reversible oxidation of malate to oxaloacetate. This is Malate dehydrogenase from Sorangium cellulosum (strain So ce56) (Polyangium cellulosum (strain So ce56)).